The following is an 86-amino-acid chain: Weak neurotoxin 9 (86 aa).

Positions Met1–Thr21 are cleaved as a signal peptide. 5 disulfides stabilise this stretch: Cys24–Cys45, Cys27–Cys32, Cys38–Cys63, Cys67–Cys78, and Cys79–Cys84.

The protein belongs to the three-finger toxin family. Ancestral subfamily. Orphan group II sub-subfamily. In terms of tissue distribution, expressed by the venom gland.

It localises to the secreted. Its function is as follows. Binds with low affinity to muscular (alpha-1-beta-1-delta-epsilon/CHRNA1-CHRNB1-CHRND-CHRNE) and very low affinity to neuronal (alpha-7/CHRNA7) nicotinic acetylcholine receptor (nAChR). The protein is Weak neurotoxin 9 of Naja sputatrix (Malayan spitting cobra).